The primary structure comprises 338 residues: Glycerol-3-phosphate dehydrogenase [NAD(P)+] (338 aa).

Residues S13, W14, and K108 each contribute to the NADPH site. Residues K108, G139, and S141 each coordinate sn-glycerol 3-phosphate. A143 contributes to the NADPH binding site. Sn-glycerol 3-phosphate contacts are provided by K194, D247, S257, R258, and N259. K194 serves as the catalytic Proton acceptor. Residue R258 coordinates NADPH. The NADPH site is built by V282 and E284.

Belongs to the NAD-dependent glycerol-3-phosphate dehydrogenase family.

It localises to the cytoplasm. The enzyme catalyses sn-glycerol 3-phosphate + NAD(+) = dihydroxyacetone phosphate + NADH + H(+). It carries out the reaction sn-glycerol 3-phosphate + NADP(+) = dihydroxyacetone phosphate + NADPH + H(+). It functions in the pathway membrane lipid metabolism; glycerophospholipid metabolism. In terms of biological role, catalyzes the reduction of the glycolytic intermediate dihydroxyacetone phosphate (DHAP) to sn-glycerol 3-phosphate (G3P), the key precursor for phospholipid synthesis. The polypeptide is Glycerol-3-phosphate dehydrogenase [NAD(P)+] (Streptococcus pneumoniae serotype 19F (strain G54)).